Consider the following 147-residue polypeptide: uncharacterized protein (147 aa).

The region spanning 1-137 is the HTH marR-type domain; it reads MRDNTIGSLI…LYELMTKVHK (137 aa). Positions 53-76 form a DNA-binding region, H-T-H motif; the sequence is QMELAEKVTVTQGGISRMLTRLEK.

This is an uncharacterized protein from Bacillus cereus (strain ATCC 10987 / NRS 248).